A 651-amino-acid chain; its full sequence is Kinesin-like protein KIF22-A (651 aa).

The 329-residue stretch at R31–I359 folds into the Kinesin motor domain. G116–T123 is an ATP binding site. The interval Q366–G413 is disordered. Residues T401–D410 show a composition bias toward polar residues. The stretch at K452–L498 forms a coiled coil. The short motif at G561 to N564 is the Important for regulated proteolytic degradation element.

The protein belongs to the TRAFAC class myosin-kinesin ATPase superfamily. Kinesin family. In terms of processing, ubiquitinated, leading to its subsequent proteasomal degradation.

The protein resides in the nucleus. Its subcellular location is the cytoplasm. It is found in the cytoskeleton. Its function is as follows. Kinesin family member that is involved in spindle formation and the movements of chromosomes during mitosis and meiosis. Binds to microtubules and to DNA. The sequence is that of Kinesin-like protein KIF22-A (kif22-a) from Xenopus laevis (African clawed frog).